Consider the following 483-residue polypeptide: Glucose-1-phosphate adenylyltransferase large subunit 3, chloroplastic/amyloplastic (483 aa).

This sequence belongs to the bacterial/plant glucose-1-phosphate adenylyltransferase family. Heterotetramer. Tubers.

Its subcellular location is the plastid. The protein localises to the chloroplast. It localises to the amyloplast. The catalysed reaction is alpha-D-glucose 1-phosphate + ATP + H(+) = ADP-alpha-D-glucose + diphosphate. The protein operates within glycan biosynthesis; starch biosynthesis. With respect to regulation, activated by 3'phosphoglycerate, inhibited by orthophosphate. Allosteric regulation. This protein plays a role in synthesis of starch. It catalyzes the synthesis of the activated glycosyl donor, ADP-glucose from Glc-1-P and ATP. This Solanum tuberosum (Potato) protein is Glucose-1-phosphate adenylyltransferase large subunit 3, chloroplastic/amyloplastic (AGPS3).